The following is a 212-amino-acid chain: Fibrillarin-like rRNA/tRNA 2'-O-methyltransferase (212 aa).

S-adenosyl-L-methionine contacts are provided by residues 76–77 (TT), 94–95 (EL), 119–120 (DA), and 139–142 (DIAQ).

This sequence belongs to the methyltransferase superfamily. Fibrillarin family. In terms of assembly, interacts with nop5. Component of box C/D small ribonucleoprotein (sRNP) particles that contain rpl7ae, FlpA and nop5, plus a guide RNA.

In terms of biological role, involved in pre-rRNA and tRNA processing. Utilizes the methyl donor S-adenosyl-L-methionine to catalyze the site-specific 2'-hydroxyl methylation of ribose moieties in rRNA and tRNA. Site specificity is provided by a guide RNA that base pairs with the substrate. Methylation occurs at a characteristic distance from the sequence involved in base pairing with the guide RNA. This is Fibrillarin-like rRNA/tRNA 2'-O-methyltransferase from Picrophilus torridus (strain ATCC 700027 / DSM 9790 / JCM 10055 / NBRC 100828 / KAW 2/3).